The chain runs to 171 residues: Shikimate kinase (171 aa).

14 to 19 (GAGKST) contacts ATP. Ser-18 serves as a coordination point for Mg(2+). Substrate-binding residues include Asp-36, Arg-60, and Gly-82. Residue Arg-120 coordinates ATP. Arg-139 lines the substrate pocket. Gln-156 is an ATP binding site.

It belongs to the shikimate kinase family. In terms of assembly, monomer. Requires Mg(2+) as cofactor.

Its subcellular location is the cytoplasm. It carries out the reaction shikimate + ATP = 3-phosphoshikimate + ADP + H(+). Its pathway is metabolic intermediate biosynthesis; chorismate biosynthesis; chorismate from D-erythrose 4-phosphate and phosphoenolpyruvate: step 5/7. Its function is as follows. Catalyzes the specific phosphorylation of the 3-hydroxyl group of shikimic acid using ATP as a cosubstrate. In Shewanella loihica (strain ATCC BAA-1088 / PV-4), this protein is Shikimate kinase.